We begin with the raw amino-acid sequence, 840 residues long: Phosphatidylinositol-3-phosphatase myotubularin-1 (840 aa).

The segment at 1–28 (MTPPRPPSGRVRSLRDYSSESEKMDGTG) is disordered. Positions 13 to 25 (SLRDYSSESEKMD) are enriched in basic and acidic residues. The GRAM domain occupies 45 to 112 (GSFSNLSCLL…ATIEKFNKMV (68 aa)). Residues 199 to 650 (GKSSIRASMD…LAPTLWPQFH (452 aa)) form the Myotubularin phosphatase domain. Substrate-binding positions include 332–335 (NGAM), 357–358 (NI), 443–449 (CSDGWDR), and R489. Catalysis depends on C443, which acts as the Phosphocysteine intermediate. The segment at 506–535 (QSSSAGSFPSSPVRQSSGSAASQSSSSSHG) is disordered. Positions 507–535 (SSSAGSFPSSPVRQSSGSAASQSSSSSHG) are enriched in low complexity. A coiled-coil region spans residues 666–734 (VQCRAMTVKY…AALTRAVQSL (69 aa)). A disordered region spans residues 745–771 (VEDDPRSSLENNPRRRNRHGNNSDVSV).

It belongs to the protein-tyrosine phosphatase family. Non-receptor class myotubularin subfamily. In terms of tissue distribution, mostly expressed in siliques and leaves (including hydathodes), and, to a lower extent, in flowers and roots.

The protein localises to the cytoplasm. Its subcellular location is the endosome membrane. It carries out the reaction a 1,2-diacyl-sn-glycero-3-phospho-(1D-myo-inositol-3-phosphate) + H2O = a 1,2-diacyl-sn-glycero-3-phospho-(1D-myo-inositol) + phosphate. The enzyme catalyses a 1,2-diacyl-sn-glycero-3-phospho-(1D-myo-inositol-3,5-bisphosphate) + H2O = a 1,2-diacyl-sn-glycero-3-phospho-(1D-myo-inositol-5-phosphate) + phosphate. In terms of biological role, phosphatase with phosphoinositide 3'-phosphatase activity that can use phosphatidylinositol-3-phosphate (PtdIns3P) and phosphatidylinositol-3,5-diphosphate (PtdIns3,5P(2)) as substrates and produces phosphatidylinositol-5-phosphate (PtdIns5P); participates in pathway(s) that transfer gene regulatory signals to the nucleus. Required for recovery after water deprivation, via the accumulation of PtdIns5P upon dehydration; high PtdIns5P levels mediate ATX1 cytoplasmic localization, thus down-regulating the expression of ATX1-dependent genes. Confers sensitivity to soil-water-deficit stress. This is Phosphatidylinositol-3-phosphatase myotubularin-1 (MTM1) from Arabidopsis thaliana (Mouse-ear cress).